A 674-amino-acid chain; its full sequence is UvrABC system protein B (674 aa).

The Helicase ATP-binding domain maps to 26–183 (EGLEDGLAHQ…RRLAELQYTR (158 aa)). ATP is bound at residue 39–46 (GVTGSGKT). A Beta-hairpin motif is present at residues 92–115 (YYDYYQPEAYVPSSDTFIEKDASV). A Helicase C-terminal domain is found at 431-597 (QVDDLLSEIR…GLNKKISDIL (167 aa)). One can recognise a UVR domain in the interval 634 to 669 (QKRIHQLEAQMQQHAQNLEFEEAAQVRDQLHQVREL).

Belongs to the UvrB family. Forms a heterotetramer with UvrA during the search for lesions. Interacts with UvrC in an incision complex.

It is found in the cytoplasm. Functionally, the UvrABC repair system catalyzes the recognition and processing of DNA lesions. A damage recognition complex composed of 2 UvrA and 2 UvrB subunits scans DNA for abnormalities. Upon binding of the UvrA(2)B(2) complex to a putative damaged site, the DNA wraps around one UvrB monomer. DNA wrap is dependent on ATP binding by UvrB and probably causes local melting of the DNA helix, facilitating insertion of UvrB beta-hairpin between the DNA strands. Then UvrB probes one DNA strand for the presence of a lesion. If a lesion is found the UvrA subunits dissociate and the UvrB-DNA preincision complex is formed. This complex is subsequently bound by UvrC and the second UvrB is released. If no lesion is found, the DNA wraps around the other UvrB subunit that will check the other stand for damage. This chain is UvrABC system protein B, found in Erwinia tasmaniensis (strain DSM 17950 / CFBP 7177 / CIP 109463 / NCPPB 4357 / Et1/99).